The following is a 224-amino-acid chain: 2-C-methyl-D-erythritol 4-phosphate cytidylyltransferase (224 aa).

The protein belongs to the IspD/TarI cytidylyltransferase family. IspD subfamily.

It catalyses the reaction 2-C-methyl-D-erythritol 4-phosphate + CTP + H(+) = 4-CDP-2-C-methyl-D-erythritol + diphosphate. The protein operates within isoprenoid biosynthesis; isopentenyl diphosphate biosynthesis via DXP pathway; isopentenyl diphosphate from 1-deoxy-D-xylulose 5-phosphate: step 2/6. Its function is as follows. Catalyzes the formation of 4-diphosphocytidyl-2-C-methyl-D-erythritol from CTP and 2-C-methyl-D-erythritol 4-phosphate (MEP). The protein is 2-C-methyl-D-erythritol 4-phosphate cytidylyltransferase of Caldicellulosiruptor saccharolyticus (strain ATCC 43494 / DSM 8903 / Tp8T 6331).